The chain runs to 155 residues: Transcription antitermination protein NusB (155 aa).

This sequence belongs to the NusB family.

Functionally, involved in transcription antitermination. Required for transcription of ribosomal RNA (rRNA) genes. Binds specifically to the boxA antiterminator sequence of the ribosomal RNA (rrn) operons. This is Transcription antitermination protein NusB from Vibrio parahaemolyticus serotype O3:K6 (strain RIMD 2210633).